The sequence spans 89 residues: Large ribosomal subunit protein uL24 (89 aa).

Belongs to the universal ribosomal protein uL24 family. As to quaternary structure, part of the 50S ribosomal subunit.

Functionally, one of two assembly initiator proteins, it binds directly to the 5'-end of the 23S rRNA, where it nucleates assembly of the 50S subunit. In terms of biological role, one of the proteins that surrounds the polypeptide exit tunnel on the outside of the subunit. The polypeptide is Large ribosomal subunit protein uL24 (Chlorobium chlorochromatii (strain CaD3)).